We begin with the raw amino-acid sequence, 478 residues long: Ribulose bisphosphate carboxylase large chain (478 aa).

Residues 1–2 (MS) constitute a propeptide that is removed on maturation. P3 is modified (N-acetylproline). K14 is subject to N6,N6,N6-trimethyllysine. Residues N123 and T173 each contribute to the substrate site. K175 functions as the Proton acceptor in the catalytic mechanism. Position 177 (K177) interacts with substrate. 3 residues coordinate Mg(2+): K201, D203, and E204. K201 is subject to N6-carboxylysine. H294 serves as the catalytic Proton acceptor. The substrate site is built by R295, H327, and S379.

Belongs to the RuBisCO large chain family. Type I subfamily. In terms of assembly, heterohexadecamer of 8 large chains and 8 small chains; disulfide-linked. The disulfide link is formed within the large subunit homodimers. Mg(2+) is required as a cofactor. Post-translationally, the disulfide bond which can form in the large chain dimeric partners within the hexadecamer appears to be associated with oxidative stress and protein turnover.

It localises to the plastid. The protein resides in the chloroplast. The enzyme catalyses 2 (2R)-3-phosphoglycerate + 2 H(+) = D-ribulose 1,5-bisphosphate + CO2 + H2O. It catalyses the reaction D-ribulose 1,5-bisphosphate + O2 = 2-phosphoglycolate + (2R)-3-phosphoglycerate + 2 H(+). RuBisCO catalyzes two reactions: the carboxylation of D-ribulose 1,5-bisphosphate, the primary event in carbon dioxide fixation, as well as the oxidative fragmentation of the pentose substrate in the photorespiration process. Both reactions occur simultaneously and in competition at the same active site. This is Ribulose bisphosphate carboxylase large chain from Lemna minor (Common duckweed).